A 470-amino-acid polypeptide reads, in one-letter code: MCENQPKTKADGTAQIEVIPCKICGDKSSGIHYGVITCEGCKGFFRRSQQNNASYSCPRQRNCLIDRTNRNRCQHCRLQKCLALGMSRDAVKFGRMSKKQRDSLYAEVQKHQQRLQEQRQQQSGEAEALARVYSSSISNGLSNLNTETGGTYANGHVIDLPKSEGYYSIDSGQPSPDQSGLDMTGIKQIKQEPIYDLTSVPNLFTYSSFNNGQLAPGITMSEIDRIAQNIIKSHLETCQYTMEELHQLAWQTHTYEEIKAYQSKSREALWQQCAIQITHAIQYVVEFAKRITGFMELCQNDQILLLKSGCLEVVLVRMCRAFNPLNNTVLFEGKYGGMQMFKALGSDDLVNEAFDFAKNLCSLQLTEEEIALFSSAVLISPDRAWLIEPRKVQKLQEKIYFALQHVIQKNHLDDETLAKLIAKIPTITAVCNLHGEKLQVFKQSHPDIVNTLFPPLYKELFNPDCAAVCK.

Residues 18 to 93 constitute a DNA-binding region (nuclear receptor); the sequence is VIPCKICGDK…LGMSRDAVKF (76 aa). 2 NR C4-type zinc fingers span residues 21-41 and 57-81; these read CKIC…CEGC and CPRQ…LQKC. The segment covering 104–117 has biased composition (basic and acidic residues); the sequence is LYAEVQKHQQRLQE. The segment at 104 to 127 is disordered; it reads LYAEVQKHQQRLQEQRQQQSGEAE. The region spanning 222–460 is the NR LBD domain; it reads EIDRIAQNII…TLFPPLYKEL (239 aa). Residues 456–461 carry the AF-2 motif; that stretch reads LYKELF.

This sequence belongs to the nuclear hormone receptor family. NR1 subfamily. In terms of assembly, monomer. Interacts with CRX. Expressed in inner and outer neuroblastic layer as well as in the ganglion cell layer of the developing retina. Expressed in bone marrow osteoprogenitor cells.

The protein localises to the nucleus. Its subcellular location is the nucleoplasm. Its function is as follows. Nuclear receptor that binds DNA as a monomer to ROR response elements (RORE) containing a single core motif half-site 5'-AGGTCA-3' preceded by a short A-T-rich sequence. Considered to have intrinsic transcriptional activity, have some natural ligands such as all-trans retinoic acid (ATRA) and other retinoids which act as inverse agonists repressing the transcriptional activity. Required for normal postnatal development of rod and cone photoreceptor cells. Modulates rod photoreceptors differentiation at least by inducing the transcription factor NRL-mediated pathway. In cone photoreceptor cells, regulates transcription of OPN1SW. Involved in the regulation of the period length and stability of the circadian rhythm. May control cytoarchitectural patterning of neocortical neurons during development. May act in a dose-dependent manner to regulate barrel formation upon innervation of layer IV neurons by thalamocortical axons. May play a role in the suppression of osteoblastic differentiation through the inhibition of RUNX2 transcriptional activity. Isoform 1 is critical for hindlimb motor control and for the differentiation of amacrine and horizontal cells in the retina. Regulates the expression of PTF1A synergistically with FOXN4. The polypeptide is Nuclear receptor ROR-beta (Rorb) (Mus musculus (Mouse)).